Consider the following 109-residue polypeptide: Large ribosomal subunit protein uL22 (109 aa).

Belongs to the universal ribosomal protein uL22 family. Part of the 50S ribosomal subunit.

Its function is as follows. This protein binds specifically to 23S rRNA; its binding is stimulated by other ribosomal proteins, e.g. L4, L17, and L20. It is important during the early stages of 50S assembly. It makes multiple contacts with different domains of the 23S rRNA in the assembled 50S subunit and ribosome. Functionally, the globular domain of the protein is located near the polypeptide exit tunnel on the outside of the subunit, while an extended beta-hairpin is found that lines the wall of the exit tunnel in the center of the 70S ribosome. In Herminiimonas arsenicoxydans, this protein is Large ribosomal subunit protein uL22.